The following is a 237-amino-acid chain: Ribosomal RNA large subunit methyltransferase E (237 aa).

S-adenosyl-L-methionine is bound by residues glycine 76, tryptophan 78, aspartate 99, aspartate 115, and aspartate 139. The active-site Proton acceptor is the lysine 179.

Belongs to the class I-like SAM-binding methyltransferase superfamily. RNA methyltransferase RlmE family.

The protein resides in the cytoplasm. It carries out the reaction uridine(2552) in 23S rRNA + S-adenosyl-L-methionine = 2'-O-methyluridine(2552) in 23S rRNA + S-adenosyl-L-homocysteine + H(+). Its function is as follows. Specifically methylates the uridine in position 2552 of 23S rRNA at the 2'-O position of the ribose in the fully assembled 50S ribosomal subunit. The sequence is that of Ribosomal RNA large subunit methyltransferase E from Rhodopseudomonas palustris (strain TIE-1).